Reading from the N-terminus, the 251-residue chain is Octanoyltransferase (251 aa).

The region spanning Asp49–Leu230 is the BPL/LPL catalytic domain. Substrate is bound by residues Arg87 to His94, Ala160 to Gly162, and Gly173 to Ala175. Residue Cys191 is the Acyl-thioester intermediate of the active site.

Belongs to the LipB family.

Its subcellular location is the cytoplasm. The enzyme catalyses octanoyl-[ACP] + L-lysyl-[protein] = N(6)-octanoyl-L-lysyl-[protein] + holo-[ACP] + H(+). Its pathway is protein modification; protein lipoylation via endogenous pathway; protein N(6)-(lipoyl)lysine from octanoyl-[acyl-carrier-protein]: step 1/2. In terms of biological role, catalyzes the transfer of endogenously produced octanoic acid from octanoyl-acyl-carrier-protein onto the lipoyl domains of lipoate-dependent enzymes. Lipoyl-ACP can also act as a substrate although octanoyl-ACP is likely to be the physiological substrate. The polypeptide is Octanoyltransferase (Corynebacterium glutamicum (strain R)).